We begin with the raw amino-acid sequence, 308 residues long: E3 ubiquitin-protein ligase SINAT2 (308 aa).

An RING-type zinc finger spans residues 60–96 (CPVCTNLMYPPIHQCPNGHTLCSNCKLRVQNTCPTCR). The SBD stretch occupies residues 110–303 (VAESLEVPCR…QELKLRVTGR (194 aa)). An SIAH-type zinc finger spans residues 113 to 173 (SLEVPCRYQN…LVVHLKDDHK (61 aa)). 8 residues coordinate Zn(2+): C118, C125, H137, C141, C148, C155, H167, and H172.

It belongs to the SINA (Seven in absentia) family. In terms of assembly, interacts with RAP2-2. Interacts with SINAT6. Interacts with ATG6 and TRAF1A. Interacts with WAV3. Interacts with FREE1. Interacts with ELC/VPS23A.

It is found in the endosome. The protein localises to the multivesicular body. Its subcellular location is the cytoplasmic vesicle. It localises to the autophagosome. The enzyme catalyses S-ubiquitinyl-[E2 ubiquitin-conjugating enzyme]-L-cysteine + [acceptor protein]-L-lysine = [E2 ubiquitin-conjugating enzyme]-L-cysteine + N(6)-ubiquitinyl-[acceptor protein]-L-lysine.. Its pathway is protein modification; protein ubiquitination. In terms of biological role, E3 ubiquitin-protein ligase that mediates ubiquitination and subsequent proteasomal degradation of target proteins. E3 ubiquitin ligases accept ubiquitin from an E2 ubiquitin-conjugating enzyme in the form of a thioester and then directly transfers the ubiquitin to targeted substrates. It probably triggers the ubiquitin-mediated degradation of different substrates. Mediates the proteasomal-dependent degradation of ATG6, a component of the autophagosome complex. Requires TRAF1A/MUSE14 and TRAF1B/MUSE13 to target ATG6 for ubiquitination and subsequent regulation of autophagosome assembly. Modulates directly the ubiquitination and proteasomal-dependent degradation of FREE1, a component of the ESCRT-I complex. Modulates directly the ubiquitination and proteasomal-dependent degradation of ELC/VPS23A, a component of the ESCRT-I complex. The chain is E3 ubiquitin-protein ligase SINAT2 from Arabidopsis thaliana (Mouse-ear cress).